Consider the following 971-residue polypeptide: Protein cwh43 (971 aa).

The segment at 1–242 (MTEKTSSLVF…PSSFATRKKE (242 aa)) is PGAP2-like. Helical transmembrane passes span 15 to 35 (VALVHTICSFAAFFIPLALAL), 71 to 91 (VFQWLIALTATPRLLVLLLWF), 101 to 121 (VIITTALGVLRTALCGGWVYV), 129 to 149 (WHDIFMIGYLISNAPWFILVS), 161 to 181 (IRNIGSALFVLTIFPLIYWYI), 188 to 208 (IPGAYTVYAFFEWSLILWDIL), 286 to 306 (VYLSFVFWSVLTSLGLLVWYF), 313 to 333 (ISGYEACILFELSPFLLGIPL), 336 to 356 (KFASKVPVIFLFLNVIGIAAY), 366 to 386 (FVTAFSVCCECLAWTSLFSNI), 397 to 417 (ISTFLFGLLASSIAKYSFFSN), 432 to 452 (QIPALIVGIIACLIFAIFHVQ), 467 to 487 (ITALSAALSLGTVLFCLHTFL), 509 to 529 (YPHGAVSIVVSICAVLVAPYL), 532 to 552 (SGAFMLIGFVLACFGSYFMYI), 555 to 575 (GWCSYLGGLIFTSYVLIYSFA), 588 to 608 (VWGGAFLVYILYSLAHVWVVA), 622 to 642 (TSYILIFIGWNLAALVPAYSG), and 673 to 693 (LLTGFCLALMALKFAIQNMPP). Residues 243 to 971 (KGEHLSYAEA…LVVHEPWYYD (729 aa)) are PGAP2IP-like. The active site involves histidine 826.

The protein in the N-terminal section; belongs to the PGAP2 family. It in the C-terminal section; belongs to the PGAP2IP family.

It is found in the cell membrane. Its subcellular location is the endoplasmic reticulum membrane. Its function is as follows. Involved in the maintenance of cell wall integrity. Required for the replacement of the diacylglycerol moiety by ceramides during GPI-anchor maturation. In Schizosaccharomyces pombe (strain 972 / ATCC 24843) (Fission yeast), this protein is Protein cwh43 (cwh43).